Consider the following 100-residue polypeptide: Large ribosomal subunit protein uL23 (100 aa).

The protein belongs to the universal ribosomal protein uL23 family. In terms of assembly, part of the 50S ribosomal subunit. Contacts protein L29, and trigger factor when it is bound to the ribosome.

One of the early assembly proteins it binds 23S rRNA. One of the proteins that surrounds the polypeptide exit tunnel on the outside of the ribosome. Forms the main docking site for trigger factor binding to the ribosome. This chain is Large ribosomal subunit protein uL23, found in Pseudothermotoga lettingae (strain ATCC BAA-301 / DSM 14385 / NBRC 107922 / TMO) (Thermotoga lettingae).